Consider the following 169-residue polypeptide: Nucleoside diphosphate kinase 3 (169 aa).

6 residues coordinate ADP: Lys29, Arg105, Thr111, Arg122, Val129, and Asn132. Catalysis depends on His135, which acts as the Pros-phosphohistidine intermediate.

The protein belongs to the NDK family. Homohexamer. It depends on Mg(2+) as a cofactor.

It is found in the mitochondrion outer membrane. Its subcellular location is the cytoplasm. The protein resides in the cytoskeleton. The protein localises to the cilium basal body. It catalyses the reaction a 2'-deoxyribonucleoside 5'-diphosphate + ATP = a 2'-deoxyribonucleoside 5'-triphosphate + ADP. The catalysed reaction is a ribonucleoside 5'-diphosphate + ATP = a ribonucleoside 5'-triphosphate + ADP. In terms of biological role, catalyzes the phosphorylation of ribonucleosides and deoxyribonucleoside diphosphates, other than ATP, into the corresponding triphosphates with ATP as the major phosphate donor. The ATP gamma phosphate is transferred to the nucleoside diphosphate beta phosphate via a ping-pong mechanism, using a phosphorylated active-site intermediate. Through the catalyzed exchange of gamma-phosphate between di- and triphosphonucleosides participates in regulation of intracellular nucleotide homeostasis. Required for ciliary function during renal development. Its function is as follows. Independently of its kinase activity, facilitates mitochondrial tethering prior to membrane fusion through its direct membrane-binding and hexamerization. Implicated in repair of both single- and double-stranded breaks in DNA, independently of its kinase activity. The protein is Nucleoside diphosphate kinase 3 of Danio rerio (Zebrafish).